Here is a 184-residue protein sequence, read N- to C-terminus: Bcl-2-modifying factor (184 aa).

The interval 67–75 (DKATQTLSP) is interaction with DLC2. A BH3 motif is present at residues 133-147 (IARKLQCIADQFHRL).

The protein belongs to the Bcl-2 family. In terms of assembly, interacts with MCL1, BCL2, BCL2L1/BCL-Xl, BCL2A1 and BCL2L2/BCL-w. Interacts with the myosin V actin motor complex through its binding to DLC2. Isoform 1 is mainly expressed in B-lymphoid cells. Isoform 2 and isoform 3 are mainly expressed in B-CLL and normal B-cells.

May play a role in apoptosis. Isoform 1 seems to be the main initiator. This chain is Bcl-2-modifying factor (BMF), found in Homo sapiens (Human).